Consider the following 436-residue polypeptide: MPDERTTGREGVGAAVLAAGFGERLRECGRPKPLARVAGLTLLERTVRTLRAGGLEGEIVVVVGHRGEEVAGHCKARGLPVRVVENPDYPRGNGTSVLAAMRFLPERFVVAMVDHIHTPESVRRLLRCEGDFVAAVDTRPVYADPGEATRVRLEGGRVVEFGKNLPRYDGLDAGLFLCSRPALERLREASGGERLSWNDLKRAWLASGGEVVACDLAGAPWTDVDTPQDLRLSEEMVLGWAASGNDGPVSRHINRRISRRITRRLLDTPLSPDQVSLLSFALAALGAGLLAAGRLRLGGALVQLASIVDGCDGELARARLESSPRGAVFDATLDRWADALIISGLALGAGTRLAAAAGYPALAGALLVSYTRARWEAALGRMPSRFTGLGATRDVRLAVLALGGLLGAPGAALLATGALGNAEALRRLLALKRGRS.

The tract at residues 11–241 (GVGAAVLAAG…LSEEMVLGWA (231 aa)) is mobA-like NTP transferase. CTP-binding positions include 17–19 (LAA) and Lys-32. The interval 242 to 435 (ASGNDGPVSR…RRLLALKRGR (194 aa)) is CDP-alcohol phosphatidyltransferases. The next 3 membrane-spanning stretches (helical) occupy residues 275 to 295 (VSLLSFALAALGAGLLAAGRL), 349 to 371 (AGTRLAAAAGYPALAGALLVSYT), and 397 to 417 (LAVLALGGLLGAPGAALLATG).

The protein in the N-terminal section; belongs to the MobA family. It in the C-terminal section; belongs to the CDP-alcohol phosphatidyltransferase class-I family.

It is found in the membrane. The enzyme catalyses 1D-myo-inositol 3-phosphate + CTP + H(+) = CDP-1L-myo-inositol + diphosphate. It carries out the reaction CDP-1L-myo-inositol + 1D-myo-inositol 3-phosphate = bis(1L-myo-inositol) 3,1'-phosphate 1-phosphate + CMP + H(+). In terms of biological role, involved in biosynthesis of di-myo-inositol phosphate (DIP), a widespread organic solute in microorganisms adapted to hot environments. Catalyzes the condensation of CTP and L-myo-inositol-1-phosphate into CDP-L-myo-inositol, as well as the biosynthesis of di-myo-inositol-1,3'-phosphate-1'-phosphate (DIPP) from CDP-L-myo-inositol and L-myo-inositol-1-phosphate. The polypeptide is Bifunctional IPC transferase and DIPP synthase (Rubrobacter xylanophilus (strain DSM 9941 / JCM 11954 / NBRC 16129 / PRD-1)).